A 90-amino-acid polypeptide reads, in one-letter code: Acylphosphatase (90 aa).

The region spanning 4–90 (TVHLRITGHV…KGQYKDFRIY (87 aa)) is the Acylphosphatase-like domain. Active-site residues include Arg19 and Asn37.

This sequence belongs to the acylphosphatase family.

The catalysed reaction is an acyl phosphate + H2O = a carboxylate + phosphate + H(+). This chain is Acylphosphatase (acyP), found in Caldanaerobacter subterraneus subsp. tengcongensis (strain DSM 15242 / JCM 11007 / NBRC 100824 / MB4) (Thermoanaerobacter tengcongensis).